Consider the following 289-residue polypeptide: HTH-type transcriptional regulator SoxR (289 aa).

Residues 1 to 58 enclose the HTH lysR-type domain; that stretch reads MEIKDLQIFQKVVEYGSVSKAAKSLNYVQSYVTVRIQKLEEELQTELFHRSSRGMVLN. The H-T-H motif DNA-binding region spans 18–37; the sequence is VSKAAKSLNYVQSYVTVRIQ.

It belongs to the LysR transcriptional regulatory family.

Transcriptional repressor of soxA gene expression. This Arthrobacter sp. (strain TE1826) protein is HTH-type transcriptional regulator SoxR (soxR).